The sequence spans 315 residues: Protein SHORT INTERNODES 1 (315 aa).

Residues 1 to 10 (MAGFPLGGGS) show a composition bias toward gly residues. Disordered stretches follow at residues 1–24 (MAGF…PPVH) and 64–92 (PPAP…GGGG). The segment covering 70–82 (AGASSSSSSRGMR) has biased composition (low complexity). The span at 83–92 (SSGGGGGGGG) shows a compositional bias: gly residues. Zn(2+) contacts are provided by C97, C100, C108, C113, C117, and C124. The segment at residues 97-124 (CQDCGNQAKKDCTHMRCRTCCKSRGFAC) is a DNA-binding region (zn(2)-C6 fungal-type; degenerate). 2 stretches are compositionally biased toward low complexity: residues 143 to 156 (QQLA…AATA) and 172 to 182 (RPSATTPTTSS). Residues 143-186 (QQLAALAASAAATAGGAGPSRDPTKRPRARPSATTPTTSSGDQQ) form a disordered region. A Required for homo- and heterodimerization motif is present at residues 227–230 (IGGH).

Belongs to the SHI protein family. Forms homodimers (via C-terminus). Interacts with SPL14/IPA1 (via C-terminus). In terms of tissue distribution, predominantly expressed in axillary buds and young panicles.

The protein resides in the nucleus. Functionally, regulates tillering and panicle branching by modulating SPL14/IPA1 transcriptional activity on the downstream TB1 and DEP1 target genes. Binds directly to the 5'-T/GCTCTAC-3' DNA motif found in the promoter regions of both TB1 and DEP1. Represses the DNA binding activity of SPL14/IPA1 toward the promoters of both TB1 and DEP1. Exhibits weak transcriptional activation activity in yeast cells. The sequence is that of Protein SHORT INTERNODES 1 from Oryza sativa subsp. japonica (Rice).